Consider the following 306-residue polypeptide: Pentalenolactone F synthase (306 aa).

Residues histidine 110 and aspartate 112 each coordinate Fe cation. 2-oxoglutarate is bound by residues threonine 138 and tryptophan 258. Histidine 273 contributes to the Fe cation binding site. Arginine 284 contributes to the 2-oxoglutarate binding site.

The protein belongs to the TfdA dioxygenase family. Fe(2+) is required as a cofactor.

The enzyme catalyses pentalenolactone D + 2 2-oxoglutarate + 2 O2 = pentalenolactone F + 2 succinate + 2 CO2 + H2O. It functions in the pathway antibiotic biosynthesis; neopentalenolactone biosynthesis. Activated by ascorbate. In terms of biological role, catalyzes the Fe(2+) and alpha-ketoglutarate-dependent oxidation of pentalenolactone D to pentalenolactone F. Also able to catalyze the oxidation of pentalenolactone D to pentalenolactone E. In presence of neopentalenolactone D, mediates production of PL308 and possibly neopentalenolactone E. The protein is Pentalenolactone F synthase (ptlD) of Streptomyces avermitilis (strain ATCC 31267 / DSM 46492 / JCM 5070 / NBRC 14893 / NCIMB 12804 / NRRL 8165 / MA-4680).